We begin with the raw amino-acid sequence, 485 residues long: Arginine biosynthesis bifunctional protein ArgJ, mitochondrial (485 aa).

T185, K214, T225, and E315 together coordinate substrate. The Nucleophile role is filled by T225.

It belongs to the ArgJ family. In terms of assembly, heterodimer of an alpha and a beta chain. Post-translationally, the alpha and beta chains are autoproteolytically processed from a single precursor protein within the mitochondrion.

It is found in the mitochondrion matrix. It carries out the reaction N(2)-acetyl-L-ornithine + L-glutamate = N-acetyl-L-glutamate + L-ornithine. The enzyme catalyses L-glutamate + acetyl-CoA = N-acetyl-L-glutamate + CoA + H(+). It participates in amino-acid biosynthesis; L-arginine biosynthesis; L-ornithine and N-acetyl-L-glutamate from L-glutamate and N(2)-acetyl-L-ornithine (cyclic): step 1/1. The protein operates within amino-acid biosynthesis; L-arginine biosynthesis; N(2)-acetyl-L-ornithine from L-glutamate: step 1/4. Catalyzes two activities which are involved in the cyclic version of arginine biosynthesis: the synthesis of acetylglutamate from glutamate and acetyl-CoA, and of ornithine by transacetylation between acetylornithine and glutamate. This is Arginine biosynthesis bifunctional protein ArgJ, mitochondrial from Penicillium rubens (strain ATCC 28089 / DSM 1075 / NRRL 1951 / Wisconsin 54-1255) (Penicillium chrysogenum).